Here is a 107-residue protein sequence, read N- to C-terminus: U1-lycotoxin-Ls1e (107 aa).

The signal sequence occupies residues 1-20 (MMKVLVVFALLVTLISYSSS). The propeptide occupies 21 to 41 (EGIDDLEADELLSLMANEQTR). 4 cysteine pairs are disulfide-bonded: Cys44-Cys59, Cys51-Cys68, Cys58-Cys86, and Cys70-Cys84.

This sequence belongs to the neurotoxin 19 (CSTX) family. 04 (U1-Lctx) subfamily. In terms of tissue distribution, expressed by the venom gland.

The protein localises to the secreted. This is U1-lycotoxin-Ls1e from Lycosa singoriensis (Wolf spider).